Reading from the N-terminus, the 465-residue chain is UDP-N-acetylmuramate--L-alanine ligase (465 aa).

ATP is bound at residue 112 to 118 (GTHGKTT).

It belongs to the MurCDEF family.

Its subcellular location is the cytoplasm. It carries out the reaction UDP-N-acetyl-alpha-D-muramate + L-alanine + ATP = UDP-N-acetyl-alpha-D-muramoyl-L-alanine + ADP + phosphate + H(+). It participates in cell wall biogenesis; peptidoglycan biosynthesis. Functionally, cell wall formation. This is UDP-N-acetylmuramate--L-alanine ligase from Janthinobacterium sp. (strain Marseille) (Minibacterium massiliensis).